A 479-amino-acid polypeptide reads, in one-letter code: Ribosomal RNA small subunit methyltransferase F (479 aa).

Residues 125–131 (AAAPGSK), glutamate 149, aspartate 176, and aspartate 194 contribute to the S-adenosyl-L-methionine site. Residue cysteine 247 is the Nucleophile of the active site.

Belongs to the class I-like SAM-binding methyltransferase superfamily. RsmB/NOP family.

The protein resides in the cytoplasm. The enzyme catalyses cytidine(1407) in 16S rRNA + S-adenosyl-L-methionine = 5-methylcytidine(1407) in 16S rRNA + S-adenosyl-L-homocysteine + H(+). Specifically methylates the cytosine at position 1407 (m5C1407) of 16S rRNA. In Salmonella paratyphi C (strain RKS4594), this protein is Ribosomal RNA small subunit methyltransferase F.